A 228-amino-acid chain; its full sequence is Response regulator MprA (228 aa).

A Response regulatory domain is found at 2 to 116 (RILAVDDDRA…ELLARIRALL (115 aa)). Residue D46 is modified to 4-aspartylphosphate. A DNA-binding region (ompR/PhoB-type) is located at residues 127–225 (SVAMSFSDLT…VRGVGYVLRE (99 aa)).

In terms of processing, phosphorylated and dephosphorylated by MprB.

It is found in the cytoplasm. In terms of biological role, member of the two-component regulatory system MprB/MprA which contributes to maintaining a balance among several systems involved in stress resistance and is required for establishment and maintenance of persistent infection in the host. Functions as a transcriptional regulator that recognizes a 19-bp nucleotide motif comprizing two loosely conserved 8-bp direct DNA-binding motif repeats separated by a 3-bp spacer region. This chain is Response regulator MprA (mprA), found in Mycobacterium leprae (strain TN).